We begin with the raw amino-acid sequence, 229 residues long: Uracil-DNA glycosylase (229 aa).

The active-site Proton acceptor is the aspartate 64.

This sequence belongs to the uracil-DNA glycosylase (UDG) superfamily. UNG family.

It localises to the cytoplasm. It catalyses the reaction Hydrolyzes single-stranded DNA or mismatched double-stranded DNA and polynucleotides, releasing free uracil.. Its function is as follows. Excises uracil residues from the DNA which can arise as a result of misincorporation of dUMP residues by DNA polymerase or due to deamination of cytosine. The polypeptide is Uracil-DNA glycosylase (Klebsiella pneumoniae (strain 342)).